The chain runs to 485 residues: Transcription factor E2FA (485 aa).

Over residues M1 to S11 the composition is skewed to low complexity. Disordered regions lie at residues M1–N69 and S114–T159. Over residues S12 to P26 the composition is skewed to pro residues. Residues S114–Q125 are compositionally biased toward polar residues. Over residues K129–G141 the composition is skewed to basic residues. The span at N142 to T159 shows a compositional bias: polar residues. A DNA-binding region spans residues R167–G232. Residues S245–W286 adopt a coiled-coil conformation. The tract at residues L249–L277 is leucine-zipper. The tract at residues D435–W450 is retinoblastoma protein binding.

This sequence belongs to the E2F/DP family. Heterodimer with DP proteins. Interacts (via dimerization domain) preferentially with DPA, but also with DPB. Interacts with maize retinoblastoma-related protein RBR1. No interaction with E2FD. In terms of tissue distribution, highly expressed in the shoot apical meristem, emerging leaf primordia, and vascular tissues of young leaf primordia. Expressed in flowers, in epidermis and cortex of hypocotyls, and at lower levels in leaves.

The protein resides in the cytoplasm. The protein localises to the nucleus. In terms of biological role, transcription activator that binds DNA cooperatively with DP proteins through the E2 recognition site, 5'-TTTC[CG]CGC-3' found in the promoter region of a number of genes whose products are involved in cell cycle regulation or in DNA replication. The binding of retinoblastoma-related proteins represses transactivation. Regulates gene expression both positively and negatively. Activates the expression of E2FB. Involved in the control of cell-cycle progression from G1 to S phase. Stimulates cell proliferation and delays differentiation. The polypeptide is Transcription factor E2FA (E2FA) (Arabidopsis thaliana (Mouse-ear cress)).